We begin with the raw amino-acid sequence, 539 residues long: GMP synthase [glutamine-hydrolyzing] (539 aa).

In terms of domain architecture, Glutamine amidotransferase type-1 spans Lys-4 to Asp-203. Residue Cys-82 is the Nucleophile of the active site. Catalysis depends on residues His-177 and Glu-179. The region spanning Trp-204 to Arg-395 is the GMPS ATP-PPase domain. Ser-231 to Ser-237 lines the ATP pocket.

As to quaternary structure, homodimer.

It carries out the reaction XMP + L-glutamine + ATP + H2O = GMP + L-glutamate + AMP + diphosphate + 2 H(+). It functions in the pathway purine metabolism; GMP biosynthesis; GMP from XMP (L-Gln route): step 1/1. Catalyzes the synthesis of GMP from XMP. This Janthinobacterium sp. (strain Marseille) (Minibacterium massiliensis) protein is GMP synthase [glutamine-hydrolyzing].